Consider the following 359-residue polypeptide: Chaperone protein DnaJ (359 aa).

A J domain is found at 3 to 68 (DYYEILGVPK…ERRQTYDRYG (66 aa)). A CR-type zinc finger spans residues 128 to 205 (GVSKDIKYKI…CAGKGFIEEQ (78 aa)). Zn(2+)-binding residues include Cys-141, Cys-144, Cys-157, Cys-160, Cys-179, Cys-182, Cys-193, and Cys-196. 4 CXXCXGXG motif repeats span residues 141–148 (CKTCDGTG), 157–164 (CPYCGGSG), 179–186 (CPFCKGSG), and 193–200 (CHDCAGKG).

It belongs to the DnaJ family. Homodimer. Zn(2+) serves as cofactor.

The protein localises to the cytoplasm. In terms of biological role, participates actively in the response to hyperosmotic and heat shock by preventing the aggregation of stress-denatured proteins and by disaggregating proteins, also in an autonomous, DnaK-independent fashion. Unfolded proteins bind initially to DnaJ; upon interaction with the DnaJ-bound protein, DnaK hydrolyzes its bound ATP, resulting in the formation of a stable complex. GrpE releases ADP from DnaK; ATP binding to DnaK triggers the release of the substrate protein, thus completing the reaction cycle. Several rounds of ATP-dependent interactions between DnaJ, DnaK and GrpE are required for fully efficient folding. Also involved, together with DnaK and GrpE, in the DNA replication of plasmids through activation of initiation proteins. In Campylobacter hominis (strain ATCC BAA-381 / DSM 21671 / CCUG 45161 / LMG 19568 / NCTC 13146 / CH001A), this protein is Chaperone protein DnaJ.